The following is a 445-amino-acid chain: MIVIDLFSGAGGLSEGFHKHDFKIAAHVEKEYWACETIKTRLFYHFLKAQNDLELYHEYLRVSDNYRNIEQSRAFVFQRYPELREKLEMEVLNRKFGNPHNDPTATSSTQMIQLIQNSLQYSRATSVDLIIGGPPCQAYSLVGRSRMKDSVGKDSRNYLFQYYKRIVDEFKPKAFVFENVPGILTAKQGKVYQEIKESFDQIGYTVLSGTSQEDRSNVIDFADFGVPQRRKRVILFGFQKKLNYEYPNFERHKLSWNSPLTTRDVISDLPVLKPKQGHDLRLFEYDTTQGVDQLSPYELMMREDSIGFTNHFARPIKERDAEIYQIAIEHATQGRQIKYNELPERLKTHKNEKAFLDRFKVHWWDIIPHTVVAHISKDGHYNIHPDIEQCRSLTVREAARIQGFPDNYKFEGPRTAQYTQVGNAVPPLMSGIIARAVKDVINGHH.

An SAM-dependent MTase C5-type domain is found at 1–444; sequence MIVIDLFSGA…RAVKDVINGH (444 aa). The active site involves Cys136.

It belongs to the class I-like SAM-binding methyltransferase superfamily. C5-methyltransferase family.

It is found in the cytoplasm. It carries out the reaction a 2'-deoxycytidine in DNA + S-adenosyl-L-methionine = a 5-methyl-2'-deoxycytidine in DNA + S-adenosyl-L-homocysteine + H(+). In terms of biological role, component of antiviral defense system DISARM (defense island system associated with restriction-modification), composed of DrmE, DrmA, DrmB, DrmC and DrmMII. DISARM is probably a multi-gene restriction module, this subunit is a DNA methylase. Expression of DISARM in B.subtilis (strain BEST7003) confers resistance to phages Nf, phi29, phi105, phi3T, SPO1, SPR and SPP1. Protection is over 10(7)-fold against phi3T, 10(4)-10(5)-fold against Nf, phi29, phi105 and SPR, 100-fold against SPO1 and 10-fold against SPP1. DISARM does not interfere with phage adsorption, but instead interferes with (phi3T) DNA replication early in its cycle, preventing replication, circularization and lysogeny and probably causes phage DNA degradation (DNA is degraded in SPP1-infected cells). Expression of this methylase alone leads to highly methylated phage, however they are still susceptible to the DISARM system. A methylase, recognizes the double-stranded sequence 5'-CCWGG-3', methylates C-2 on both strands. Phage Nf does not have any 5'-CCWGG-3' motifs but is still targeted by the DISARM system. The protein is Type II methyltransferase M.Bpa9945I of Bacillus paralicheniformis (strain ATCC 9945a / NCIMB 11709 / CD-2).